Consider the following 509-residue polypeptide: uncharacterized protein (509 aa).

Belongs to the MG032/MG096/MG288 family.

This is an uncharacterized protein from Mycoplasma pneumoniae (strain ATCC 29342 / M129 / Subtype 1) (Mycoplasmoides pneumoniae).